The following is a 156-amino-acid chain: Small ribosomal subunit protein uS7 (156 aa).

The protein belongs to the universal ribosomal protein uS7 family. As to quaternary structure, part of the 30S ribosomal subunit. Contacts proteins S9 and S11.

One of the primary rRNA binding proteins, it binds directly to 16S rRNA where it nucleates assembly of the head domain of the 30S subunit. Is located at the subunit interface close to the decoding center, probably blocks exit of the E-site tRNA. The chain is Small ribosomal subunit protein uS7 from Kineococcus radiotolerans (strain ATCC BAA-149 / DSM 14245 / SRS30216).